A 628-amino-acid polypeptide reads, in one-letter code: Pinene synthase, chloroplastic (628 aa).

The transit peptide at 1 to 36 (MALVSTAPLASKSCLHKSLISSTHELKALSRTIPAL) directs the protein to the chloroplast. Residues Asp-379, Asp-383, and Asp-531 each contribute to the Mg(2+) site. The DDXXD motif signature appears at 379–383 (DDMYD).

Belongs to the terpene synthase family. Tpsd subfamily. Mg(2+) serves as cofactor. It depends on Mn(2+) as a cofactor. Requires K(+) as cofactor.

It localises to the plastid. It is found in the chloroplast. The enzyme catalyses (2E)-geranyl diphosphate = (1S,5S)-alpha-pinene + diphosphate. The catalysed reaction is (2E)-geranyl diphosphate = (1S,5S)-beta-pinene + diphosphate. It functions in the pathway terpene metabolism; oleoresin biosynthesis. Involved in defensive oleoresin formation in conifers in response to insect attack or other injury. Involved in monoterpene (C10) olefins biosynthesis. A mixture of alpha- and beta-pinene is produced by this enzyme. In Abies grandis (Grand fir), this protein is Pinene synthase, chloroplastic (ag3).